The following is a 529-amino-acid chain: tRNA pseudouridine synthase Pus10 (529 aa).

2 residues coordinate Zn(2+): cysteine 21 and cysteine 24. A coiled-coil region spans residues 42–89 (KELLNELQKFLETEKDELILEVMNPPPKKIRLQELEDSIDNLSQNGEG). 2 positions are modified to phosphoserine: serine 79 and serine 84. Zn(2+) contacts are provided by cysteine 109 and cysteine 112. The RNA binding forefinger loop stretch occupies residues 304–317 (TPWIIDGERKLESS). Aspartate 344 serves as the catalytic Nucleophile. The tract at residues 442–457 (QKTPLRVLHRRPLAVR) is RNA binding thumb loop.

Belongs to the pseudouridine synthase Pus10 family. In terms of assembly, interacts with components of the microprocessor complex DROSHA and DGCR8. In terms of processing, proteolytically cleaved during TRAIL-induced cell death. Cleaved, in vitro, either by caspase-3 (CASP3) or caspase-8 (CASP8).

Its subcellular location is the nucleus. It is found in the cytoplasm. The protein localises to the mitochondrion. It carries out the reaction uridine(55) in tRNA = pseudouridine(55) in tRNA. The catalysed reaction is uridine(54) in tRNA = pseudouridine(54) in tRNA. In terms of biological role, protein with different functions depending on its subcellular location: involved in miRNA processing in the nucleus and acts as a tRNA pseudouridylate synthase in the cytoplasm. In the cytoplasm, acts as a pseudouridylate synthase by catalyzing synthesis of pseudouridine(54) and pseudouridine(55) from uracil-54 and uracil-55, respectively, in the psi GC loop of a subset of tRNAs. tRNA pseudouridylate synthase activity is enhanced by the presence of 1-methyladenosine at position 53-61 of tRNAs. Does not show tRNA pseudouridylate synthase activity in the nucleus. In the nucleus, promotes primary microRNAs (pri-miRNAs) processing independently of its RNA pseudouridylate synthase activity. Binds pri-miRNAs. Modulator of TRAIL/TNFSF10-induced cell death via activation of procaspase-8 and BID cleavage. Required for the progression of the apoptotic signal through intrinsic mitochondrial cell death. The chain is tRNA pseudouridine synthase Pus10 from Homo sapiens (Human).